Here is a 196-residue protein sequence, read N- to C-terminus: Corticoliberin (196 aa).

The N-terminal stretch at 1-24 (MRLPLLVSAGVLLVALLPCPPCRA) is a signal peptide. A propeptide spanning residues 25–153 (LLSRGPVPGA…HQEAPERERR (129 aa)) is cleaved from the precursor. 3 disordered regions span residues 32 to 61 (PGARQAPQHPQPLDFFQPPPQSEQPQQPQA), 85 to 105 (APLSPASSLLAGGSGSRPSPE), and 136 to 158 (GARNALGGHQEAPERERRSEEPP). 2 stretches are compositionally biased toward low complexity: residues 38-47 (PQHPQPLDFF) and 85-104 (APLSPASSLLAGGSGSRPSP). The segment covering 146–156 (EAPERERRSEE) has biased composition (basic and acidic residues). Position 194 is an isoleucine amide (Ile194).

It belongs to the sauvagine/corticotropin-releasing factor/urotensin I family. As to quaternary structure, interacts (via C-terminus) with CRFR1 (via N-terminal extracellular domain). In terms of tissue distribution, produced by the hypothalamus and placenta.

It is found in the secreted. Functionally, hormone regulating the release of corticotropin from pituitary gland. Induces NLRP6 in intestinal epithelial cells, hence may influence gut microbiota profile. This Homo sapiens (Human) protein is Corticoliberin (CRH).